Reading from the N-terminus, the 177-residue chain is Sec-independent protein translocase protein TatB (177 aa).

The chain crosses the membrane as a helical span at residues 1-21 (MFDFAWSEIAVIGVVALVVIG). Residues 136 to 146 (REKTVSSETAR) show a composition bias toward basic and acidic residues. The interval 136-177 (REKTVSSETARRAATAPAFIPPGEAFRSARRAPAFIPPADQG) is disordered.

It belongs to the TatB family. As to quaternary structure, the Tat system comprises two distinct complexes: a TatABC complex, containing multiple copies of TatA, TatB and TatC subunits, and a separate TatA complex, containing only TatA subunits. Substrates initially bind to the TatABC complex, which probably triggers association of the separate TatA complex to form the active translocon.

Its subcellular location is the cell inner membrane. Its function is as follows. Part of the twin-arginine translocation (Tat) system that transports large folded proteins containing a characteristic twin-arginine motif in their signal peptide across membranes. Together with TatC, TatB is part of a receptor directly interacting with Tat signal peptides. TatB may form an oligomeric binding site that transiently accommodates folded Tat precursor proteins before their translocation. This chain is Sec-independent protein translocase protein TatB, found in Granulibacter bethesdensis (strain ATCC BAA-1260 / CGDNIH1).